The sequence spans 372 residues: tRNA 2-selenouridine synthase (372 aa).

The region spanning 17–140 (FLQDIPLIDV…LRNFLLTTLE (124 aa)) is the Rhodanese domain. The active-site S-selanylcysteine intermediate is cysteine 100.

It belongs to the SelU family. Monomer.

It carries out the reaction 5-methylaminomethyl-2-thiouridine(34) in tRNA + selenophosphate + (2E)-geranyl diphosphate + H2O + H(+) = 5-methylaminomethyl-2-selenouridine(34) in tRNA + (2E)-thiogeraniol + phosphate + diphosphate. It catalyses the reaction 5-methylaminomethyl-2-thiouridine(34) in tRNA + (2E)-geranyl diphosphate = 5-methylaminomethyl-S-(2E)-geranyl-thiouridine(34) in tRNA + diphosphate. The enzyme catalyses 5-methylaminomethyl-S-(2E)-geranyl-thiouridine(34) in tRNA + selenophosphate + H(+) = 5-methylaminomethyl-2-(Se-phospho)selenouridine(34) in tRNA + (2E)-thiogeraniol. The catalysed reaction is 5-methylaminomethyl-2-(Se-phospho)selenouridine(34) in tRNA + H2O = 5-methylaminomethyl-2-selenouridine(34) in tRNA + phosphate. Involved in the post-transcriptional modification of the uridine at the wobble position (U34) of tRNA(Lys), tRNA(Glu) and tRNA(Gln). Catalyzes the conversion of 2-thiouridine (S2U-RNA) to 2-selenouridine (Se2U-RNA). Acts in a two-step process involving geranylation of 2-thiouridine (S2U) to S-geranyl-2-thiouridine (geS2U) and subsequent selenation of the latter derivative to 2-selenouridine (Se2U) in the tRNA chain. This chain is tRNA 2-selenouridine synthase, found in Serratia proteamaculans (strain 568).